A 359-amino-acid polypeptide reads, in one-letter code: Peptide chain release factor 1 (359 aa).

Gln235 is modified (N5-methylglutamine).

It belongs to the prokaryotic/mitochondrial release factor family. Post-translationally, methylated by PrmC. Methylation increases the termination efficiency of RF1.

It is found in the cytoplasm. In terms of biological role, peptide chain release factor 1 directs the termination of translation in response to the peptide chain termination codons UAG and UAA. In Verminephrobacter eiseniae (strain EF01-2), this protein is Peptide chain release factor 1.